The following is a 168-amino-acid chain: S-ribosylhomocysteine lyase (168 aa).

The Fe cation site is built by H54, H58, and C128.

Belongs to the LuxS family. As to quaternary structure, homodimer. Fe cation is required as a cofactor.

It catalyses the reaction S-(5-deoxy-D-ribos-5-yl)-L-homocysteine = (S)-4,5-dihydroxypentane-2,3-dione + L-homocysteine. Involved in the synthesis of autoinducer 2 (AI-2) which is secreted by bacteria and is used to communicate both the cell density and the metabolic potential of the environment. The regulation of gene expression in response to changes in cell density is called quorum sensing. Catalyzes the transformation of S-ribosylhomocysteine (RHC) to homocysteine (HC) and 4,5-dihydroxy-2,3-pentadione (DPD). The polypeptide is S-ribosylhomocysteine lyase (Neisseria meningitidis serogroup C / serotype 2a (strain ATCC 700532 / DSM 15464 / FAM18)).